The sequence spans 549 residues: Glutamyl-tRNA(Gln) amidotransferase subunit B, chloroplastic/mitochondrial (549 aa).

Belongs to the GatB/GatE family. GatB subfamily. Subunit of the heterotrimeric GatCAB amidotransferase (AdT) complex, composed of A, B and C subunits.

The protein localises to the mitochondrion. It localises to the plastid. It is found in the chloroplast. It carries out the reaction L-glutamyl-tRNA(Gln) + L-glutamine + ATP + H2O = L-glutaminyl-tRNA(Gln) + L-glutamate + ADP + phosphate + H(+). Functionally, allows the formation of correctly charged Gln-tRNA(Gln) through the transamidation of misacylated Glu-tRNA(Gln) in chloroplasts and mitochondria. The reaction takes place in the presence of glutamine and ATP through an activated gamma-phospho-Glu-tRNA(Gln). The polypeptide is Glutamyl-tRNA(Gln) amidotransferase subunit B, chloroplastic/mitochondrial (Ricinus communis (Castor bean)).